Reading from the N-terminus, the 842-residue chain is MGGDFRHFSSHVSLLLLFLLIVKSSSSFTPADNYLIDCGSSDETKLSDGRNFKSDQQSVAFLQTDEDIKTSVDSIPITDSNASTLPLYLTARIFAGKSTYSFYISRPGRHWIRLHFYPLNHPLYNLTNSVFSVTTDTTVLLHDFSAGDTSSIVFKEYLIYAAEKLSLYFKPHKGSTAFINAVEIVSVPDELVPDSASSVPQAPDFKGLSSFSLEILHRINIGGDLISPKIDPLSRTWLSDKPYNTFPEGSRNVTVDPSTITYPDGGATALIAPNPVYATAEEMADAQTSQPNFNLSWRMSVDFGHDYFIRLHFCDIVSKSLNDLIFNVFINKLSAISALDLSSLTSALGTAYYADFVLNASTITNGSILVQVGPTPNLQSGKPNAILNGLEIMKLNNAAGSLDGLFGVDGKYKGPIGGMSSKKLAIAGIGFVMALTAFLGVVVLLVRWQRRPKDWQKQNSFSSWLLPLHASHSSYISSKGGSTSRRMSIFGSKKSKSNGFSSFFSNQGLGRYFPFTELQTATQNFDENAVCGVGGFGKVYIGEIDGGTQVAIKRGSQSSEQGINEFQTEIQMLSKLRHRHLVSLIGFCDENKEMILVYEYMSNGPLRDHLYGSKENDPNPIPTLSWKQRLEICIGSARGLHYLHTGAAQGIIHRDVKTTNILLDENLVAKVSDFGLSKDAPMDEGHVSTAVKGSFGYLDPEYFRRQQLTDKSDVYSFGVVLFEVLCARPVINPQLPREQVNLAEYAMNLHRKGMLEKIIDPKIVGTISKGSLRKFVEAAEKCLAEYGVDRPGMGDVLWNLEYALQLQEASAQVDLSEDKTTMNIEMDLIPGEEMQSPSHSIP.

Residues 1-27 (MGGDFRHFSSHVSLLLLFLLIVKSSSS) form the signal peptide. The Extracellular portion of the chain corresponds to 28 to 425 (FTPADNYLID…IGGMSSKKLA (398 aa)). N-linked (GlcNAc...) asparagine glycosylation is found at N81, N125, N252, N294, N359, and N365. Residues 426-446 (IAGIGFVMALTAFLGVVVLLV) traverse the membrane as a helical segment. Topologically, residues 447 to 842 (RWQRRPKDWQ…EMQSPSHSIP (396 aa)) are cytoplasmic. The Protein kinase domain maps to 525-803 (FDENAVCGVG…GDVLWNLEYA (279 aa)). Residues 531 to 539 (CGVGGFGKV) and K553 contribute to the ATP site. The active-site Proton acceptor is the D655.

The protein belongs to the protein kinase superfamily. Ser/Thr protein kinase family.

The protein resides in the membrane. The sequence is that of Probable receptor-like protein kinase At5g61350 from Arabidopsis thaliana (Mouse-ear cress).